Here is a 190-residue protein sequence, read N- to C-terminus: GTP cyclohydrolase 1 (190 aa).

3 residues coordinate Zn(2+): C80, H83, and C151.

It belongs to the GTP cyclohydrolase I family. As to quaternary structure, toroid-shaped homodecamer, composed of two pentamers of five dimers.

It catalyses the reaction GTP + H2O = 7,8-dihydroneopterin 3'-triphosphate + formate + H(+). It participates in cofactor biosynthesis; 7,8-dihydroneopterin triphosphate biosynthesis; 7,8-dihydroneopterin triphosphate from GTP: step 1/1. This chain is GTP cyclohydrolase 1, found in Rickettsia typhi (strain ATCC VR-144 / Wilmington).